Reading from the N-terminus, the 206-residue chain is Small ribosomal subunit protein uS4 (206 aa).

Positions 96–158 (SRLDNVVYRM…AKKQSRIKAA (63 aa)) constitute an S4 RNA-binding domain.

This sequence belongs to the universal ribosomal protein uS4 family. Part of the 30S ribosomal subunit. Contacts protein S5. The interaction surface between S4 and S5 is involved in control of translational fidelity.

Functionally, one of the primary rRNA binding proteins, it binds directly to 16S rRNA where it nucleates assembly of the body of the 30S subunit. With S5 and S12 plays an important role in translational accuracy. The polypeptide is Small ribosomal subunit protein uS4 (Wigglesworthia glossinidia brevipalpis).